The chain runs to 73 residues: Large ribosomal subunit protein bL31 (73 aa).

The protein belongs to the bacterial ribosomal protein bL31 family. Type A subfamily. As to quaternary structure, part of the 50S ribosomal subunit.

Its function is as follows. Binds the 23S rRNA. The polypeptide is Large ribosomal subunit protein bL31 (Ruegeria sp. (strain TM1040) (Silicibacter sp.)).